The following is a 140-amino-acid chain: Nucleoside diphosphate kinase (140 aa).

ATP is bound by residues Lys-11, Phe-59, Arg-87, Thr-93, Arg-104, and Asn-114. His-117 acts as the Pros-phosphohistidine intermediate in catalysis.

It belongs to the NDK family. In terms of assembly, homotetramer. The cofactor is Mg(2+).

It localises to the cytoplasm. The catalysed reaction is a 2'-deoxyribonucleoside 5'-diphosphate + ATP = a 2'-deoxyribonucleoside 5'-triphosphate + ADP. The enzyme catalyses a ribonucleoside 5'-diphosphate + ATP = a ribonucleoside 5'-triphosphate + ADP. Functionally, major role in the synthesis of nucleoside triphosphates other than ATP. The ATP gamma phosphate is transferred to the NDP beta phosphate via a ping-pong mechanism, using a phosphorylated active-site intermediate. This chain is Nucleoside diphosphate kinase, found in Rhodospirillum centenum (strain ATCC 51521 / SW).